Here is an 85-residue protein sequence, read N- to C-terminus: Cell division protein ZapA (85 aa).

Positions 60 to 85 form a coiled coil; it reads AVNVVHDYLKLKEELERLKGQIKEKD.

It belongs to the ZapA family. Type 2 subfamily. In terms of assembly, homodimer. Interacts with FtsZ.

The protein localises to the cytoplasm. Activator of cell division through the inhibition of FtsZ GTPase activity, therefore promoting FtsZ assembly into bundles of protofilaments necessary for the formation of the division Z ring. It is recruited early at mid-cell but it is not essential for cell division. This is Cell division protein ZapA from Bacillus licheniformis (strain ATCC 14580 / DSM 13 / JCM 2505 / CCUG 7422 / NBRC 12200 / NCIMB 9375 / NCTC 10341 / NRRL NRS-1264 / Gibson 46).